The primary structure comprises 1396 residues: DNA-directed RNA polymerase subunit beta' (1396 aa).

Residues Cys72, Cys74, Cys87, and Cys90 each coordinate Zn(2+). 3 residues coordinate Mg(2+): Asp463, Asp465, and Asp467. 4 residues coordinate Zn(2+): Cys814, Cys889, Cys896, and Cys899.

Belongs to the RNA polymerase beta' chain family. As to quaternary structure, the RNAP catalytic core consists of 2 alpha, 1 beta, 1 beta' and 1 omega subunit. When a sigma factor is associated with the core the holoenzyme is formed, which can initiate transcription. The cofactor is Mg(2+). It depends on Zn(2+) as a cofactor.

The enzyme catalyses RNA(n) + a ribonucleoside 5'-triphosphate = RNA(n+1) + diphosphate. Its function is as follows. DNA-dependent RNA polymerase catalyzes the transcription of DNA into RNA using the four ribonucleoside triphosphates as substrates. The chain is DNA-directed RNA polymerase subunit beta' from Chlamydia trachomatis serovar A (strain ATCC VR-571B / DSM 19440 / HAR-13).